The following is a 206-amino-acid chain: Small ribosomal subunit protein uS4 (206 aa).

Residues Thr-96–Lys-156 enclose the S4 RNA-binding domain.

Belongs to the universal ribosomal protein uS4 family. In terms of assembly, part of the 30S ribosomal subunit. Contacts protein S5. The interaction surface between S4 and S5 is involved in control of translational fidelity.

In terms of biological role, one of the primary rRNA binding proteins, it binds directly to 16S rRNA where it nucleates assembly of the body of the 30S subunit. Its function is as follows. With S5 and S12 plays an important role in translational accuracy. This Shewanella sp. (strain ANA-3) protein is Small ribosomal subunit protein uS4.